We begin with the raw amino-acid sequence, 564 residues long: Malignant brain tumor repeat protein 1 (564 aa).

MBT repeat units follow at residues 64-176, 205-327, 331-442, and 450-549; these read FTWS…MKWL, RPTE…TKAT, LEHS…LDRL, and FKWE…LRHP.

Interacts with histone H3 that is trimethylated at 'Lys-9' (H3K9me3).

The sequence is that of Malignant brain tumor repeat protein 1 (mbtr-1) from Caenorhabditis elegans.